The sequence spans 380 residues: Apelin receptor (380 aa).

The Extracellular portion of the chain corresponds to 1–30; it reads MEEGGDFDNYYGADNQSECEYTDWKSSGAL. The N-linked (GlcNAc...) asparagine glycan is linked to Asn-15. 2 cysteine pairs are disulfide-bonded: Cys-19-Cys-281 and Cys-102-Cys-181. A helical membrane pass occupies residues 31 to 54; the sequence is IPAIYMLVFLLGTTGNGLVLWTVF. At 55-64 the chain is on the cytoplasmic side; it reads RSSREKRRSA. Residues 65-86 traverse the membrane as a helical segment; sequence DIFIASLAVADLTFVVTLPLWA. Residues 87 to 99 lie on the Extracellular side of the membrane; that stretch reads TYTYRDYDWPFGT. Residues 100–125 form a helical membrane-spanning segment; that stretch reads FSCKLSSYLIFVNMYASVFCLTGLSF. The Cytoplasmic portion of the chain corresponds to 126 to 146; it reads DRYLAIVRPVANARLRLRVSG. The chain crosses the membrane as a helical span at residues 147 to 164; sequence AVATAVLWVLAALLAMPV. Residues 165 to 198 are Extracellular-facing; it reads MVFRTTGDLENTTKVQCYMDYSMVATVSSDWAWE. Asn-175 carries an N-linked (GlcNAc...) asparagine glycan. A helical transmembrane segment spans residues 199–223; that stretch reads VGLGVSSTTVGFVVPFTIMLTCYFF. The Cytoplasmic segment spans residues 224–246; that stretch reads IAQTIAGHFRKERIEGLRKRRRL. The helical transmembrane segment at 247-270 threads the bilayer; that stretch reads LSIIVVLVVTFALCWMPYHLVKTL. At 271 to 289 the chain is on the extracellular side; it reads YMLGSLLHWPCDFDLFLMN. Residues 290–312 traverse the membrane as a helical segment; it reads VFPYCTCISYVNSCLNPFLYAFF. Topologically, residues 313 to 380 are cytoplasmic; that stretch reads DPRFRQACTS…PYSQETLVVD (68 aa). The segment covering 342–351 has biased composition (low complexity); the sequence is KSASYSSGHS. Residues 342–380 are disordered; it reads KSASYSSGHSQGPGPNMGKGGEQMHEKSIPYSQETLVVD. Over residues 371–380 the composition is skewed to polar residues; that stretch reads PYSQETLVVD.

Belongs to the G-protein coupled receptor 1 family. Homodimer; dimerization inhibits APLNR-mediated G protein and beta-arrestin signaling pathways compared to monomeric APLNR.

The protein localises to the cell membrane. Its function is as follows. G protein-coupled receptor for peptide hormones apelin (APLN) and apelin receptor early endogenous ligand (APELA/ELA), that plays a role in the regulation of normal cardiovascular function and fluid homeostasis. When acting as apelin receptor, activates both G(i) protein pathway that inhibits adenylate cyclase activity, and the beta-arrestin pathway that promotes internalization of the receptor. APLNR/APJ also functions as mechanoreceptor that is activated by pathological stimuli in a G-protein-independent fashion to induce beta-arrestin signaling, hence eliciting cardiac hypertrophy. However, the presence of apelin ligand blunts cardiac hypertrophic induction from APLNR/APJ on response to pathological stimuli. Plays a key role in early development such as gastrulation, blood vessels formation and heart morphogenesis by acting as a APELA receptor. May promote angioblast migration toward the embryonic midline, i.e. the position of the future vessel formation, during vasculogenesis. Promotes sinus venosus (SV)-derived endothelial cells migration into the developing heart to promote coronary blood vessel development. Also plays a role in various processes in adults such as regulation of blood vessel formation, blood pressure, heart contractility and heart failure. Functionally, (Microbial infection) Alternative coreceptor with CD4 for HIV-1 infection; may be involved in the development of AIDS dementia. This is Apelin receptor (APLNR) from Macaca mulatta (Rhesus macaque).